Here is a 246-residue protein sequence, read N- to C-terminus: Probable phosphatase Tola_0828 (246 aa).

Zn(2+) contacts are provided by H8, H10, H16, H41, E74, H102, H132, D193, and H195.

This sequence belongs to the PHP family. Zn(2+) is required as a cofactor.

This is Probable phosphatase Tola_0828 from Tolumonas auensis (strain DSM 9187 / NBRC 110442 / TA 4).